The chain runs to 452 residues: Caspase-2 (452 aa).

Position 2 is an N-acetylalanine (Ala-2). Positions 2-169 are excised as a propeptide; the sequence is AAPSAGSWST…TVEHSLDNKD (168 aa). A CARD domain is found at 32–121; that stretch reads MHPHHQETLK…GHLEDMLLTT (90 aa). A Phosphoserine modification is found at Ser-157. Residues His-277 and Cys-320 contribute to the active site. The propeptide occupies 326-333; the sequence is DRGVDQQD. The span at 327–336 shows a compositional bias: basic and acidic residues; that stretch reads RGVDQQDGKN. A disordered region spans residues 327–354; sequence RGVDQQDGKNHAGSPGCEESDAGKEKLP. At Ser-340 the chain carries Phosphoserine.

This sequence belongs to the peptidase C14A family. In terms of assembly, heterotetramer that consists of two anti-parallel arranged heterodimers, each one formed by a p18 subunit and a p12 subunit. Forms a complex named the PIDDosome with PIDD1 and CRADD. Interacts with NOL3 (via CARD domain); inhibits CASP2 activity in a phosphorylation-dependent manner. Post-translationally, the mature protease can process its own propeptide, but not that of other caspases. Expressed at higher levels in the embryonic lung, liver and kidney than in the heart and brain. In adults, higher level expression is seen in the placenta, lung, kidney, and pancreas than in the heart, brain, liver and skeletal muscle.

The catalysed reaction is Strict requirement for an Asp residue at P1, with 316-Asp being essential for proteolytic activity and has a preferred cleavage sequence of Val-Asp-Val-Ala-Asp-|-.. Is a regulator of the cascade of caspases responsible for apoptosis execution. Might function by either activating some proteins required for cell death or inactivating proteins necessary for cell survival. Associates with PIDD1 and CRADD to form the PIDDosome, a complex that activates CASP2 and triggers apoptosis in response to genotoxic stress. In terms of biological role, acts as a positive regulator of apoptosis. Functionally, acts as a negative regulator of apoptosis. Its function is as follows. May function as an endogenous apoptosis inhibitor that antagonizes caspase activation and cell death. This chain is Caspase-2 (CASP2), found in Homo sapiens (Human).